We begin with the raw amino-acid sequence, 655 residues long: p-hydroxybenzoic acid efflux pump subunit AaeB (655 aa).

The next 11 helical transmembrane spans lie at 13–33 (FAVK…HFQL), 38–58 (WAVL…GGEP), 69–89 (LRII…IAMI), 93–113 (LLMI…SSLV), 121–141 (WGLA…EPLL), 152–172 (EIVI…PRSI), 370–390 (LFWL…IAVV), 407–427 (FIYG…VIIP), 431–451 (QSML…GIEV), 459–479 (MGAL…TFHF), and 482–502 (FLDS…VILL).

This sequence belongs to the aromatic acid exporter ArAE (TC 2.A.85) family.

Its subcellular location is the cell inner membrane. Functionally, forms an efflux pump with AaeA. Could function as a metabolic relief valve, allowing to eliminate certain compounds when they accumulate to high levels in the cell. In Shigella sonnei (strain Ss046), this protein is p-hydroxybenzoic acid efflux pump subunit AaeB.